A 288-amino-acid chain; its full sequence is Probable aquaporin PIP1-2 (288 aa).

The tract at residues 1–37 is disordered; the sequence is MEGKEEDVRLGANKFSERQPIGTAAQGSDDKDYKEPP. 2 helical membrane-spanning segments follow: residues 57 to 77 and 92 to 114; these read IAEF…VMGV and IAWS…SGGH. An NPA 1 motif is present at residues 116–118; the sequence is NPA. 3 helical membrane passes run 135–155, 177–197, and 211–231; these read LFYM…VKGF, GDGL…VFSA, and ILAP…TIPI. The NPA 2 signature appears at 237–239; sequence NPA. A helical membrane pass occupies residues 259–279; the sequence is IFWVGPFIGAALAAIYHQVVI.

The protein belongs to the MIP/aquaporin (TC 1.A.8) family. PIP (TC 1.A.8.11) subfamily. In terms of tissue distribution, expressed in roots, leaves and anthers.

It localises to the cell membrane. Aquaporins facilitate the transport of water and small neutral solutes across cell membranes. The chain is Probable aquaporin PIP1-2 (PIP1-2) from Oryza sativa subsp. japonica (Rice).